Reading from the N-terminus, the 704-residue chain is Protein cueball (704 aa).

The first 26 residues, 1 to 26 (MKSPCRAAAGWLVLLLSSCCLGYVIA), serve as a signal peptide directing secretion. The Extracellular segment spans residues 27-594 (TEWAAAVTTD…TYCKESFNRT (568 aa)). LDL-receptor class B repeat units lie at residues 69-119 (GKLY…DHLE), 120-166 (RRLY…EATT), 199-242 (RHLY…DHYR), and 243-288 (NRLY…KNDY). N-linked (GlcNAc...) asparagine glycans are attached at residues asparagine 152 and asparagine 219. 3 consecutive EGF-like domains span residues 363 to 397 (TQQQGQLTVCLNNGTVNHHTNTCLCQPAFGGKLCE), 432 to 478 (DRNR…ARCE), and 514 to 551 (EEYSCNNYCLNGGHCTLGNETTVPECECGEEFAGQRCE). 8 disulfide bridges follow: cysteine 372/cysteine 385, cysteine 387/cysteine 396, cysteine 436/cysteine 446, cysteine 440/cysteine 465, cysteine 467/cysteine 477, cysteine 518/cysteine 528, cysteine 522/cysteine 539, and cysteine 541/cysteine 550. Residue asparagine 375 is glycosylated (N-linked (GlcNAc...) asparagine). Residue asparagine 450 is glycosylated (N-linked (GlcNAc...) asparagine). Asparagine 532 carries N-linked (GlcNAc...) asparagine glycosylation. An N-linked (GlcNAc...) asparagine glycan is attached at asparagine 592. Residues 595–615 (VVYTSLCFTVSFALLLAVVLV) form a helical membrane-spanning segment. Over 616 to 704 (VSRMMKPPRP…NCGDGTAERK (89 aa)) the chain is Cytoplasmic.

Belongs to the cueball family.

It is found in the cell membrane. In terms of biological role, has a role in spermatogenesis and oogenesis. This chain is Protein cueball, found in Anopheles gambiae (African malaria mosquito).